Reading from the N-terminus, the 1385-residue chain is Coiled-coil domain-containing protein 7 (1385 aa).

Residues 299–330 adopt a coiled-coil conformation; it reads LDAEYKQMQCDFQLLSEEKLVLENELQKLKDK. Positions 329-364 are disordered; sequence DKEKTKPTNNRTKKAVKTVKKKDKGKSEDSEKKMSP. Basic residues predominate over residues 339 to 352; the sequence is RTKKAVKTVKKKDK. Residues 353–364 are compositionally biased toward basic and acidic residues; the sequence is GKSEDSEKKMSP. Residues 374–411 adopt a coiled-coil conformation; the sequence is LDQVQKVARLEIENKVLQEQLKQALQEAEKAKHQLNYF. Disordered stretches follow at residues 422-545, 572-752, and 809-834; these read GKTE…SKEV, TESK…EPNE, and TKKL…LKHQ. The segment covering 425 to 436 has biased composition (polar residues); sequence ETTMQVGNSQTK. Composition is skewed to basic and acidic residues over residues 437 to 455 and 481 to 490; these read VKGE…RKSL and LIEKSSEKKR. 3 stretches are compositionally biased toward polar residues: residues 493 to 503, 511 to 528, and 536 to 545; these read PAISDLSQILK, LESS…YKSP, and LTTVSSSKEV. The segment covering 573-589 has biased composition (basic and acidic residues); sequence ESKKADVSEEQLQKMTE. The segment covering 654–664 has biased composition (polar residues); it reads RIQSETKNLKA. Basic and acidic residues-rich tracts occupy residues 665–676 and 685–697; these read TRNESFHSHNDV and QDTK…EVKK. Residues 701-711 are compositionally biased toward polar residues; that stretch reads FQDNQLSTHNE. Positions 712 to 726 are enriched in basic and acidic residues; sequence VPNERLVVEHQESLS.

As to expression, expressed in epithelium of normal cervix and cervical cancer. Overexpressed in early and interim cervical cancer.

Its function is as follows. May play a role in tumorigenesis. The polypeptide is Coiled-coil domain-containing protein 7 (CCDC7) (Homo sapiens (Human)).